The primary structure comprises 499 residues: Lysine--tRNA ligase (499 aa).

Residues Glu409 and Glu416 each coordinate Mg(2+).

Belongs to the class-II aminoacyl-tRNA synthetase family. Homodimer. Requires Mg(2+) as cofactor.

The protein resides in the cytoplasm. It carries out the reaction tRNA(Lys) + L-lysine + ATP = L-lysyl-tRNA(Lys) + AMP + diphosphate. This chain is Lysine--tRNA ligase, found in Thioalkalivibrio sulfidiphilus (strain HL-EbGR7).